The following is a 665-amino-acid chain: Methionine--tRNA ligase (665 aa).

Residues 12–22 carry the 'HIGH' region motif; the sequence is YYPSGKLHIGS. The 'KMSKS' region motif lies at 308 to 312; the sequence is KMSKS. ATP is bound at residue K311. A tRNA-binding domain is found at 562-665; sequence TFDAVEIRVA…PSVPNGSIIG (104 aa).

The protein belongs to the class-I aminoacyl-tRNA synthetase family. MetG type 2B subfamily. In terms of assembly, homodimer.

It is found in the cytoplasm. The enzyme catalyses tRNA(Met) + L-methionine + ATP = L-methionyl-tRNA(Met) + AMP + diphosphate. Is required not only for elongation of protein synthesis but also for the initiation of all mRNA translation through initiator tRNA(fMet) aminoacylation. This Streptococcus pyogenes serotype M6 (strain ATCC BAA-946 / MGAS10394) protein is Methionine--tRNA ligase (metG).